A 212-amino-acid polypeptide reads, in one-letter code: Transmembrane emp24 domain-containing protein p24delta7 (212 aa).

Residues 1-22 form the signal peptide; it reads MNHRRSSIVLLILSILSPVTLS. Residues 23–179 lie on the Lumenal side of the membrane; sequence IRYELLSGHT…HNLNIATNSK (157 aa). In terms of domain architecture, GOLD spans 32 to 147; the sequence is TKCISEEIHA…VETMEFEVKK (116 aa). Residues 162–175 are a coiled coil; it reads LRDREEEMHNLNIA. Residue arginine 165 is modified to Omega-N-methylated arginine. A helical membrane pass occupies residues 180–200; it reads MAWLSFVSLAVCLSVAGLQFW. Residues 201-212 are Cytoplasmic-facing; it reads HLKTFFQKKKLI. The COPII vesicle coat-binding motif lies at 205–206; that stretch reads FF. A COPI vesicle coat-binding motif is present at residues 205–212; the sequence is FFQKKKLI.

It belongs to the EMP24/GP25L family. In terms of assembly, probably oligomerizes with other members of the EMP24/GP25L family. Associates with the COPI vesicle coat (coatomer). Associates with the COPII vesicle coat (coatomer).

Its subcellular location is the endoplasmic reticulum membrane. The protein resides in the golgi apparatus. It localises to the cis-Golgi network membrane. It is found in the golgi stack membrane. Its function is as follows. Involved in vesicular protein trafficking. Mainly functions in the early secretory pathway. Thought to act as cargo receptor at the lumenal side for incorporation of secretory cargo molecules into transport vesicles and to be involved in vesicle coat formation at the cytoplasmic side. In Arabidopsis thaliana (Mouse-ear cress), this protein is Transmembrane emp24 domain-containing protein p24delta7.